A 544-amino-acid chain; its full sequence is DNA mismatch repair protein MutL (544 aa).

The protein belongs to the DNA mismatch repair MutL/HexB family.

Functionally, this protein is involved in the repair of mismatches in DNA. It is required for dam-dependent methyl-directed DNA mismatch repair. May act as a 'molecular matchmaker', a protein that promotes the formation of a stable complex between two or more DNA-binding proteins in an ATP-dependent manner without itself being part of a final effector complex. The polypeptide is DNA mismatch repair protein MutL (Thermodesulfovibrio yellowstonii (strain ATCC 51303 / DSM 11347 / YP87)).